Reading from the N-terminus, the 307-residue chain is Quinolinate synthase (307 aa).

Residues His-23 and Ser-40 each coordinate iminosuccinate. Cys-86 lines the [4Fe-4S] cluster pocket. Iminosuccinate-binding positions include 112–114 (YVN) and Ser-129. Cys-173 contributes to the [4Fe-4S] cluster binding site. Residues 199–201 (HPE) and Thr-216 contribute to the iminosuccinate site. Residue Cys-265 participates in [4Fe-4S] cluster binding.

Belongs to the quinolinate synthase family. Type 2 subfamily. [4Fe-4S] cluster is required as a cofactor.

It is found in the cytoplasm. It carries out the reaction iminosuccinate + dihydroxyacetone phosphate = quinolinate + phosphate + 2 H2O + H(+). The protein operates within cofactor biosynthesis; NAD(+) biosynthesis; quinolinate from iminoaspartate: step 1/1. Catalyzes the condensation of iminoaspartate with dihydroxyacetone phosphate to form quinolinate. The chain is Quinolinate synthase from Methanocaldococcus jannaschii (strain ATCC 43067 / DSM 2661 / JAL-1 / JCM 10045 / NBRC 100440) (Methanococcus jannaschii).